A 146-amino-acid polypeptide reads, in one-letter code: Hemoglobin subunit beta (146 aa).

Val-1 is modified (N-acetylvaline). One can recognise a Globin domain in the interval 2-146 (HLTPEEKNAV…VANALAHKYH (145 aa)). The residue at position 12 (Thr-12) is a Phosphothreonine. Ser-44 carries the phosphoserine modification. Lys-59 is modified (N6-acetyllysine). His-63 contributes to the heme b binding site. Lys-82 is modified (N6-acetyllysine). His-92 serves as a coordination point for heme b. The residue at position 93 (Cys-93) is an S-nitrosocysteine. Lys-144 is modified (N6-acetyllysine).

Belongs to the globin family. As to quaternary structure, heterotetramer of two alpha chains and two beta chains. In terms of tissue distribution, red blood cells.

In terms of biological role, involved in oxygen transport from the lung to the various peripheral tissues. This Theropithecus gelada (Gelada baboon) protein is Hemoglobin subunit beta (HBB).